A 1035-amino-acid chain; its full sequence is Electrogenic sodium bicarbonate cotransporter 1 (1035 aa).

Residues 1–421 lie on the Cytoplasmic side of the membrane; the sequence is MSSEKECLEN…FASDFYDALS (421 aa). Residues 192–217 show a composition bias toward polar residues; sequence SRLFSTPDNGSPTMTHRNLTSTSLND. Disordered stretches follow at residues 192–222 and 348–389; these read SRLFSTPDNGSPTMTHRNLTSTSLNDVSDKP and IEPP…GDSE. Residues 376-389 are compositionally biased toward basic and acidic residues; sequence APHDDGGGGHGDSE. Residues 422–446 form a helical membrane-spanning segment; sequence IQSLSAILFIYLGTVTNAITFGGLL. The Extracellular segment spans residues 447 to 456; sequence GDATENMQGV. The helical transmembrane segment at 457 to 475 threads the bilayer; it reads LESFLGTAVSGAVFCLFGG. Residue Q476 is a topological domain, cytoplasmic. A discontinuously helical transmembrane segment spans residues 477–497; that stretch reads PLTILSSTGPVLVFERLLFNF. The Extracellular segment spans residues 498-505; sequence SKDNDFDY. Residues 506–526 traverse the membrane as a helical segment; that stretch reads LEFRLWIGLWSAFQCLILVAT. Topologically, residues 527 to 540 are cytoplasmic; it reads DASFLVKYFTRFTE. Residues 541–564 traverse the membrane as a helical segment; it reads EGFSSLISFIFIYDAFKKMIKLAD. Residues 565-648 lie on the Extracellular side of the membrane; it reads YYPINSHFKV…GSNCKYVPDI (84 aa). Residues N591, N596, N609, and N617 are each glycosylated (N-linked (GlcNAc...) asparagine). The chain crosses the membrane as a helical span at residues 649–666; that stretch reads TLMSFILFLGTYTCSMAL. The Cytoplasmic portion of the chain corresponds to 667–681; the sequence is KKFKTSRYFPTTARK. A helical membrane pass occupies residues 682 to 701; the sequence is LISDFAIILSILIFCGLDAL. Residues 702 to 735 lie on the Extracellular side of the membrane; the sequence is LGVDTPKLIVPSEFKPTSPNRGWFVPPFGGNPWW. Residues 736–763 form a helical membrane-spanning segment; it reads VYLAAAIPALLVTILIFMDQQITGVIVN. The Cytoplasmic segment spans residues 764 to 775; that stretch reads RKEHKLKKGAGY. The helical transmembrane segment at 776–792 threads the bilayer; sequence HLDLFWVAILMVVCSFM. Position 793 (A793) is a topological domain, extracellular. The chain crosses the membrane as a discontinuously helical span at residues 794-811; the sequence is LPWYVAATVISIAHIDSL. Residues 812 to 833 are Cytoplasmic-facing; it reads KMETETSAPGEQPKFLGVREQR. The helical transmembrane segment at 834 to 850 threads the bilayer; that stretch reads VTGTVVFLLTGLSVFMA. Over 851 to 857 the chain is Extracellular; the sequence is PILKFIP. A helical transmembrane segment spans residues 858–874; the sequence is MPVLYGVFLYMGVASLN. At 875–916 the chain is on the cytoplasmic side; that stretch reads GVQFMDRLKLLLMPPKYQPDFIYLRHVPLRRVHLFTFLQVVC. The segment at residues 917 to 942 is an intramembrane region (discontinuously helical); it reads LAMLWILKSTVAAIIFPVMILALVAV. At 943–1035 the chain is on the cytoplasmic side; it reads RKAMDYFFSQ…PTFLERHTSC (93 aa). The tract at residues 968-1035 is disordered; that stretch reads KKKEDEKKKK…PTFLERHTSC (68 aa). The span at 1007–1035 shows a compositional bias: basic and acidic residues; sequence IMEKEPFLIDSKPSDRENSPTFLERHTSC.

This sequence belongs to the anion exchanger (TC 2.A.31) family. As to quaternary structure, homodimer. As to expression, expressed in kidney and to a lower extent in bladder, brain, intestine, large intestine and eye.

It localises to the basolateral cell membrane. The protein resides in the cell membrane. It catalyses the reaction 2 hydrogencarbonate(out) + Na(+)(out) = 2 hydrogencarbonate(in) + Na(+)(in). It carries out the reaction 3 hydrogencarbonate(out) + Na(+)(out) = 3 hydrogencarbonate(in) + Na(+)(in). Functionally, electrogenic sodium/bicarbonate cotransporter with a Na(+):HCO3(-) stoichiometry varying from 1:2 to 1:3. May regulate bicarbonate influx/efflux at the basolateral membrane of cells and regulate intracellular pH. The sequence is that of Electrogenic sodium bicarbonate cotransporter 1 (SLC4A4) from Ambystoma tigrinum (Eastern tiger salamander).